Here is a 428-residue protein sequence, read N- to C-terminus: Elongation factor 1-alpha (428 aa).

The tr-type G domain occupies 5 to 225; the sequence is KPILNVAFIG…DAFQPPEKPT (221 aa). Residues 14 to 21 form a G1 region; the sequence is GHVDAGKS. 14–21 lines the GTP pocket; the sequence is GHVDAGKS. Residue Ser-21 coordinates Mg(2+). Residues 70–74 are G2; that stretch reads GVTID. The G3 stretch occupies residues 91 to 94; it reads DCPG. GTP-binding positions include 91 to 95 and 149 to 152; these read DCPGH and NKMD. The interval 149 to 152 is G4; it reads NKMD. The interval 189 to 191 is G5; the sequence is ASL.

This sequence belongs to the TRAFAC class translation factor GTPase superfamily. Classic translation factor GTPase family. EF-Tu/EF-1A subfamily.

Its subcellular location is the cytoplasm. The catalysed reaction is GTP + H2O = GDP + phosphate + H(+). GTP hydrolase that promotes the GTP-dependent binding of aminoacyl-tRNA to the A-site of ribosomes during protein biosynthesis. This chain is Elongation factor 1-alpha, found in Methanococcus maripaludis (strain C7 / ATCC BAA-1331).